Reading from the N-terminus, the 307-residue chain is tRNA pseudouridine synthase B (307 aa).

Aspartate 41 acts as the Nucleophile in catalysis.

Belongs to the pseudouridine synthase TruB family. Type 1 subfamily.

It carries out the reaction uridine(55) in tRNA = pseudouridine(55) in tRNA. Responsible for synthesis of pseudouridine from uracil-55 in the psi GC loop of transfer RNAs. The sequence is that of tRNA pseudouridine synthase B from Prochlorococcus marinus (strain AS9601).